The chain runs to 224 residues: Phosphoribosylformylglycinamidine synthase subunit PurQ (224 aa).

One can recognise a Glutamine amidotransferase type-1 domain in the interval 4–224 (RIGIITFPGT…YSVLDGVLAG (221 aa)). Catalysis depends on Cys-87, which acts as the Nucleophile. Active-site residues include His-195 and Glu-197.

As to quaternary structure, part of the FGAM synthase complex composed of 1 PurL, 1 PurQ and 2 PurS subunits.

The protein localises to the cytoplasm. It carries out the reaction N(2)-formyl-N(1)-(5-phospho-beta-D-ribosyl)glycinamide + L-glutamine + ATP + H2O = 2-formamido-N(1)-(5-O-phospho-beta-D-ribosyl)acetamidine + L-glutamate + ADP + phosphate + H(+). It catalyses the reaction L-glutamine + H2O = L-glutamate + NH4(+). The protein operates within purine metabolism; IMP biosynthesis via de novo pathway; 5-amino-1-(5-phospho-D-ribosyl)imidazole from N(2)-formyl-N(1)-(5-phospho-D-ribosyl)glycinamide: step 1/2. In terms of biological role, part of the phosphoribosylformylglycinamidine synthase complex involved in the purines biosynthetic pathway. Catalyzes the ATP-dependent conversion of formylglycinamide ribonucleotide (FGAR) and glutamine to yield formylglycinamidine ribonucleotide (FGAM) and glutamate. The FGAM synthase complex is composed of three subunits. PurQ produces an ammonia molecule by converting glutamine to glutamate. PurL transfers the ammonia molecule to FGAR to form FGAM in an ATP-dependent manner. PurS interacts with PurQ and PurL and is thought to assist in the transfer of the ammonia molecule from PurQ to PurL. This chain is Phosphoribosylformylglycinamidine synthase subunit PurQ, found in Mycolicibacterium paratuberculosis (strain ATCC BAA-968 / K-10) (Mycobacterium paratuberculosis).